A 649-amino-acid chain; its full sequence is 1-deoxy-D-xylulose-5-phosphate synthase (649 aa).

Residues histidine 73 and 114–116 (SHA) contribute to the thiamine diphosphate site. Aspartate 145 provides a ligand contact to Mg(2+). Thiamine diphosphate is bound by residues 146 to 147 (GA), asparagine 175, tyrosine 286, and glutamate 367. Position 175 (asparagine 175) interacts with Mg(2+).

Belongs to the transketolase family. DXPS subfamily. Homodimer. The cofactor is Mg(2+). Thiamine diphosphate is required as a cofactor.

It catalyses the reaction D-glyceraldehyde 3-phosphate + pyruvate + H(+) = 1-deoxy-D-xylulose 5-phosphate + CO2. It participates in metabolic intermediate biosynthesis; 1-deoxy-D-xylulose 5-phosphate biosynthesis; 1-deoxy-D-xylulose 5-phosphate from D-glyceraldehyde 3-phosphate and pyruvate: step 1/1. Functionally, catalyzes the acyloin condensation reaction between C atoms 2 and 3 of pyruvate and glyceraldehyde 3-phosphate to yield 1-deoxy-D-xylulose-5-phosphate (DXP). This Rhodococcus jostii (strain RHA1) protein is 1-deoxy-D-xylulose-5-phosphate synthase.